Reading from the N-terminus, the 475-residue chain is TOM1-like protein 1 (475 aa).

Residues 22-154 (ATFAGVQTED…DLLKKGVQFP (133 aa)) enclose the VHS domain. The interval 155 to 175 (PLDGEPETKQEAGQISPSRPT) is disordered. A compositionally biased stretch (polar residues) spans 165-175 (EAGQISPSRPT). Position 170 is a phosphoserine (Ser-170). Residues 199–287 (EQIGKLHSEL…AILGYERFTR (89 aa)) enclose the GAT domain. The interval 296–317 (KRNPTEANQTSSEPSAPSCDLL) is disordered. Over residues 300-310 (TEANQTSSEPS) the composition is skewed to polar residues. Residue Ser-313 is modified to Phosphoserine. Residues 392 to 395 (YDNF) form an interaction with GRB2 region. The SH3-binding signature appears at 421–425 (LPPLP). Positions 442-445 (YEVM) are interaction with PIK3R1. Tyr-458 carries the post-translational modification Phosphotyrosine. The SH2-binding signature appears at 458–461 (YEEI).

This sequence belongs to the TOM1 family. As to quaternary structure, interacts with the SH2 and SH3 domains of FYN when phosphorylated. Also interacts with GRB2 and PIK3R1 when phosphorylated. Interacts with LYN. Phosphorylated on tyrosines by FYN and LYN.

It localises to the golgi apparatus. The protein localises to the golgi stack. The protein resides in the endosome membrane. It is found in the cytoplasm. Its subcellular location is the membrane. Functionally, probable adapter protein involved in signaling pathways. Interacts with the SH2 and SH3 domains of various signaling proteins when it is phosphorylated. May promote FYN activation, possibly by disrupting intramolecular SH3-dependent interactions. In Rattus norvegicus (Rat), this protein is TOM1-like protein 1 (Tom1l1).